Reading from the N-terminus, the 732-residue chain is Zinc/cadmium/lead-transporting P-type ATPase (732 aa).

Residues 1-124 (MSTPDNHGKK…QAAEEPQASR (124 aa)) lie on the Cytoplasmic side of the membrane. An HMA domain is found at 48–112 (TRYSWKVSGM…ALQKAGYSLR (65 aa)). Asp58, Cys59, and Cys62 together coordinate Zn(2+). A helical transmembrane segment spans residues 125–145 (LKENLPLITLIVMMAISWGLE). Gln146 is a topological domain (periplasmic). Residues 147 to 167 (FNHPFGQLAFIATTLVGLYPI) form a helical membrane-spanning segment. The Cytoplasmic segment spans residues 168-179 (ARQALRLIKSGS). Residues 180–197 (YFAIETLMSVAAIGALFI) form a helical membrane-spanning segment. The Periplasmic portion of the chain corresponds to 198–202 (GATAE). Residues 203 to 222 (AAMVLLLFLIGERLEGWAAS) traverse the membrane as a helical segment. Over 223-356 (RARQGVSALM…IDRFSRIYTP (134 aa)) the chain is Cytoplasmic. The chain crosses the membrane as a helical span at residues 357–377 (AIMAVALLVTLVPPLLFAASW). Residues 378–383 (QEWIYK) are Periplasmic-facing. A helical transmembrane segment spans residues 384-404 (GLTLLLIGCPCALVISTPAAI). Residues Cys392 and Cys394 each coordinate Zn(2+). The Cytoplasmic segment spans residues 405–685 (TSGLAAAARR…RATHANIRQN (281 aa)). The active-site 4-aspartylphosphate intermediate is Asp436. Residues Asp436, Thr438, and Asp628 each coordinate Mg(2+). Residues 686–702 (ITIALGLKGIFLVTTLL) form a helical membrane-spanning segment. Residues 703-707 (GMTGL) lie on the Periplasmic side of the membrane. A helical membrane pass occupies residues 708 to 729 (WLAVLADTGATVLVTANALRLL). Residue Asp714 participates in Zn(2+) binding. Residues 730–732 (RRR) lie on the Cytoplasmic side of the membrane.

Belongs to the cation transport ATPase (P-type) (TC 3.A.3) family. Type IB subfamily.

The protein localises to the cell inner membrane. The catalysed reaction is Pb(2+)(in) + ATP + H2O = Pb(2+)(out) + ADP + phosphate + H(+). It carries out the reaction Zn(2+)(in) + ATP + H2O = Zn(2+)(out) + ADP + phosphate + H(+). The enzyme catalyses Cd(2+)(in) + ATP + H2O = Cd(2+)(out) + ADP + phosphate + H(+). With respect to regulation, inhibited by orthovanadate. Its function is as follows. Confers resistance to zinc, cadmium and lead. Couples the hydrolysis of ATP with the export of zinc, cadmium or lead, with highest activity when the metals are present as metal-thiolate complexes. Can also bind nickel, copper, cobalt and mercury. The sequence is that of Zinc/cadmium/lead-transporting P-type ATPase from Escherichia coli (strain K12).